Reading from the N-terminus, the 125-residue chain is Large ribosomal subunit protein bL12 (125 aa).

The protein belongs to the bacterial ribosomal protein bL12 family. In terms of assembly, homodimer. Part of the ribosomal stalk of the 50S ribosomal subunit. Forms a multimeric L10(L12)X complex, where L10 forms an elongated spine to which 2 to 4 L12 dimers bind in a sequential fashion. Binds GTP-bound translation factors.

Its function is as follows. Forms part of the ribosomal stalk which helps the ribosome interact with GTP-bound translation factors. Is thus essential for accurate translation. This chain is Large ribosomal subunit protein bL12, found in Erythrobacter litoralis (strain HTCC2594).